Here is a 168-residue protein sequence, read N- to C-terminus: Protein-export protein SecB (168 aa).

It belongs to the SecB family. As to quaternary structure, homotetramer, a dimer of dimers. One homotetramer interacts with 1 SecA dimer.

It is found in the cytoplasm. Functionally, one of the proteins required for the normal export of preproteins out of the cell cytoplasm. It is a molecular chaperone that binds to a subset of precursor proteins, maintaining them in a translocation-competent state. It also specifically binds to its receptor SecA. In Glaesserella parasuis serovar 5 (strain SH0165) (Haemophilus parasuis), this protein is Protein-export protein SecB.